We begin with the raw amino-acid sequence, 264 residues long: Thymidylate synthase (264 aa).

Position 21 (R21) interacts with dUMP. Residue H51 participates in (6R)-5,10-methylene-5,6,7,8-tetrahydrofolate binding. 126–127 is a binding site for dUMP; the sequence is RR. C146 functions as the Nucleophile in the catalytic mechanism. DUMP-binding positions include 166–169, N177, and 207–209; these read RSCD and HLY. D169 provides a ligand contact to (6R)-5,10-methylene-5,6,7,8-tetrahydrofolate. A263 is a binding site for (6R)-5,10-methylene-5,6,7,8-tetrahydrofolate.

Belongs to the thymidylate synthase family. Bacterial-type ThyA subfamily. As to quaternary structure, homodimer.

It localises to the cytoplasm. It carries out the reaction dUMP + (6R)-5,10-methylene-5,6,7,8-tetrahydrofolate = 7,8-dihydrofolate + dTMP. Its pathway is pyrimidine metabolism; dTTP biosynthesis. In terms of biological role, catalyzes the reductive methylation of 2'-deoxyuridine-5'-monophosphate (dUMP) to 2'-deoxythymidine-5'-monophosphate (dTMP) while utilizing 5,10-methylenetetrahydrofolate (mTHF) as the methyl donor and reductant in the reaction, yielding dihydrofolate (DHF) as a by-product. This enzymatic reaction provides an intracellular de novo source of dTMP, an essential precursor for DNA biosynthesis. This Shewanella sp. (strain ANA-3) protein is Thymidylate synthase.